The primary structure comprises 222 residues: Protein-L-isoaspartate O-methyltransferase (222 aa).

Residue Ser72 is part of the active site.

It belongs to the methyltransferase superfamily. L-isoaspartyl/D-aspartyl protein methyltransferase family.

The protein localises to the cytoplasm. The enzyme catalyses [protein]-L-isoaspartate + S-adenosyl-L-methionine = [protein]-L-isoaspartate alpha-methyl ester + S-adenosyl-L-homocysteine. In terms of biological role, catalyzes the methyl esterification of L-isoaspartyl residues in peptides and proteins that result from spontaneous decomposition of normal L-aspartyl and L-asparaginyl residues. It plays a role in the repair and/or degradation of damaged proteins. The polypeptide is Protein-L-isoaspartate O-methyltransferase (Picosynechococcus sp. (strain ATCC 27264 / PCC 7002 / PR-6) (Agmenellum quadruplicatum)).